The primary structure comprises 659 residues: Exoribonuclease 2 (659 aa).

An RNB domain is found at 189-531; that stretch reads RENLTALHFV…NHRLIKAVLA (343 aa). In terms of domain architecture, S1 motif spans 576-658; that stretch reads NAEFEAEVQD…ATRSIVGEIL (83 aa).

This sequence belongs to the RNR ribonuclease family. RNase II subfamily.

The protein resides in the cytoplasm. The catalysed reaction is Exonucleolytic cleavage in the 3'- to 5'-direction to yield nucleoside 5'-phosphates.. Involved in mRNA degradation. Hydrolyzes single-stranded polyribonucleotides processively in the 3' to 5' direction. The chain is Exoribonuclease 2 from Haemophilus influenzae (strain PittGG).